Reading from the N-terminus, the 92-residue chain is MPRSLKKGPFIDISLLKKVEKSVKINDKKPIKTWSRRSTIFPNMVGLTISIHNGRSHIPVFVTEEMVGHKLGEFSLTRTYRGHTADKKVKKR.

The protein belongs to the universal ribosomal protein uS19 family.

Its function is as follows. Protein S19 forms a complex with S13 that binds strongly to the 16S ribosomal RNA. This chain is Small ribosomal subunit protein uS19, found in Buchnera aphidicola subsp. Acyrthosiphon pisum (strain 5A).